We begin with the raw amino-acid sequence, 321 residues long: Ribose-phosphate pyrophosphokinase (321 aa).

Residues 44–46 and 103–104 contribute to the ATP site; these read DGE and RQ. Mg(2+) is bound by residues His137 and Asp179. Lys202 is an active-site residue. D-ribose 5-phosphate-binding positions include Arg204, Asp228, and 232 to 236; that span reads DTAGT.

The protein belongs to the ribose-phosphate pyrophosphokinase family. Class I subfamily. In terms of assembly, homohexamer. It depends on Mg(2+) as a cofactor.

It localises to the cytoplasm. It catalyses the reaction D-ribose 5-phosphate + ATP = 5-phospho-alpha-D-ribose 1-diphosphate + AMP + H(+). It functions in the pathway metabolic intermediate biosynthesis; 5-phospho-alpha-D-ribose 1-diphosphate biosynthesis; 5-phospho-alpha-D-ribose 1-diphosphate from D-ribose 5-phosphate (route I): step 1/1. Involved in the biosynthesis of the central metabolite phospho-alpha-D-ribosyl-1-pyrophosphate (PRPP) via the transfer of pyrophosphoryl group from ATP to 1-hydroxyl of ribose-5-phosphate (Rib-5-P). The chain is Ribose-phosphate pyrophosphokinase from Staphylococcus aureus (strain Mu50 / ATCC 700699).